A 274-amino-acid chain; its full sequence is Large ribosomal subunit protein uL2 (274 aa).

Residues 223–274 (VAMNPVDHPHGGGEGRTSGGRHPVTPWGVPTKGYKTRSNKRTDKYIVRRRNK) form a disordered region.

The protein belongs to the universal ribosomal protein uL2 family. Part of the 50S ribosomal subunit. Forms a bridge to the 30S subunit in the 70S ribosome.

Its function is as follows. One of the primary rRNA binding proteins. Required for association of the 30S and 50S subunits to form the 70S ribosome, for tRNA binding and peptide bond formation. It has been suggested to have peptidyltransferase activity; this is somewhat controversial. Makes several contacts with the 16S rRNA in the 70S ribosome. This chain is Large ribosomal subunit protein uL2, found in Shewanella putrefaciens (strain CN-32 / ATCC BAA-453).